Here is a 387-residue protein sequence, read N- to C-terminus: S-adenosylmethionine synthase (387 aa).

Residue His-17 participates in ATP binding. Residue Asp-19 participates in Mg(2+) binding. Glu-45 lines the K(+) pocket. Positions 58 and 101 each coordinate L-methionine. The segment at 101-111 is flexible loop; sequence QSPDIAQGVDR. ATP is bound by residues 168-170, 234-235, Asp-243, 249-250, Ala-266, and Lys-270; these read DAK, RF, and RK. Asp-243 is an L-methionine binding site. Lys-274 is an L-methionine binding site.

The protein belongs to the AdoMet synthase family. In terms of assembly, homotetramer; dimer of dimers. It depends on Mg(2+) as a cofactor. K(+) serves as cofactor.

It is found in the cytoplasm. The catalysed reaction is L-methionine + ATP + H2O = S-adenosyl-L-methionine + phosphate + diphosphate. The protein operates within amino-acid biosynthesis; S-adenosyl-L-methionine biosynthesis; S-adenosyl-L-methionine from L-methionine: step 1/1. Its function is as follows. Catalyzes the formation of S-adenosylmethionine (AdoMet) from methionine and ATP. The overall synthetic reaction is composed of two sequential steps, AdoMet formation and the subsequent tripolyphosphate hydrolysis which occurs prior to release of AdoMet from the enzyme. The chain is S-adenosylmethionine synthase from Bordetella petrii (strain ATCC BAA-461 / DSM 12804 / CCUG 43448).